The following is a 392-amino-acid chain: Queuine tRNA-ribosyltransferase (392 aa).

The active-site Proton acceptor is the Asp-93. Residues 93-97, Asp-147, Gln-189, and Gly-216 contribute to the substrate site; that span reads DSGGY. The RNA binding stretch occupies residues 247 to 253; the sequence is GVGAPED. Asp-266 (nucleophile) is an active-site residue. The RNA binding; important for wobble base 34 recognition stretch occupies residues 271–275; sequence TRVAR. Zn(2+) is bound by residues Cys-304, Cys-306, Cys-309, and His-335.

This sequence belongs to the queuine tRNA-ribosyltransferase family. Homodimer. Within each dimer, one monomer is responsible for RNA recognition and catalysis, while the other monomer binds to the replacement base PreQ1. Zn(2+) is required as a cofactor.

The catalysed reaction is 7-aminomethyl-7-carbaguanine + guanosine(34) in tRNA = 7-aminomethyl-7-carbaguanosine(34) in tRNA + guanine. It participates in tRNA modification; tRNA-queuosine biosynthesis. Its function is as follows. Catalyzes the base-exchange of a guanine (G) residue with the queuine precursor 7-aminomethyl-7-deazaguanine (PreQ1) at position 34 (anticodon wobble position) in tRNAs with GU(N) anticodons (tRNA-Asp, -Asn, -His and -Tyr). Catalysis occurs through a double-displacement mechanism. The nucleophile active site attacks the C1' of nucleotide 34 to detach the guanine base from the RNA, forming a covalent enzyme-RNA intermediate. The proton acceptor active site deprotonates the incoming PreQ1, allowing a nucleophilic attack on the C1' of the ribose to form the product. After dissociation, two additional enzymatic reactions on the tRNA convert PreQ1 to queuine (Q), resulting in the hypermodified nucleoside queuosine (7-(((4,5-cis-dihydroxy-2-cyclopenten-1-yl)amino)methyl)-7-deazaguanosine). The protein is Queuine tRNA-ribosyltransferase of Dehalococcoides mccartyi (strain ATCC BAA-2266 / KCTC 15142 / 195) (Dehalococcoides ethenogenes (strain 195)).